We begin with the raw amino-acid sequence, 305 residues long: Ribosomal RNA small subunit methyltransferase H (305 aa).

S-adenosyl-L-methionine contacts are provided by residues 30-32 (GGH), Asp-49, Phe-74, Asp-96, and Gln-103.

It belongs to the methyltransferase superfamily. RsmH family.

It localises to the cytoplasm. It catalyses the reaction cytidine(1402) in 16S rRNA + S-adenosyl-L-methionine = N(4)-methylcytidine(1402) in 16S rRNA + S-adenosyl-L-homocysteine + H(+). Its function is as follows. Specifically methylates the N4 position of cytidine in position 1402 (C1402) of 16S rRNA. The polypeptide is Ribosomal RNA small subunit methyltransferase H (Francisella tularensis subsp. holarctica (strain LVS)).